Reading from the N-terminus, the 369-residue chain is Anhydro-N-acetylmuramic acid kinase (369 aa).

12–19 is an ATP binding site; that stretch reads GTSLDGVD.

This sequence belongs to the anhydro-N-acetylmuramic acid kinase family.

It carries out the reaction 1,6-anhydro-N-acetyl-beta-muramate + ATP + H2O = N-acetyl-D-muramate 6-phosphate + ADP + H(+). Its pathway is amino-sugar metabolism; 1,6-anhydro-N-acetylmuramate degradation. The protein operates within cell wall biogenesis; peptidoglycan recycling. Its function is as follows. Catalyzes the specific phosphorylation of 1,6-anhydro-N-acetylmuramic acid (anhMurNAc) with the simultaneous cleavage of the 1,6-anhydro ring, generating MurNAc-6-P. Is required for the utilization of anhMurNAc either imported from the medium or derived from its own cell wall murein, and thus plays a role in cell wall recycling. The sequence is that of Anhydro-N-acetylmuramic acid kinase from Shigella boydii serotype 18 (strain CDC 3083-94 / BS512).